The chain runs to 106 residues: UPF0473 protein LSEI_0788 (106 aa).

Belongs to the UPF0473 family.

This Lacticaseibacillus paracasei (strain ATCC 334 / BCRC 17002 / CCUG 31169 / CIP 107868 / KCTC 3260 / NRRL B-441) (Lactobacillus paracasei) protein is UPF0473 protein LSEI_0788.